A 151-amino-acid chain; its full sequence is Guanylate kinase homolog (151 aa).

The Guanylate kinase-like domain maps to 1–141; it reads MEREGVDYHY…AYSKLIQILQ (141 aa).

The protein belongs to the guanylate kinase family.

This chain is Guanylate kinase homolog, found in Bos taurus (Bovine).